A 338-amino-acid chain; its full sequence is RNA 3'-terminal phosphate cyclase (338 aa).

ATP contacts are provided by residues glutamine 103 and 283 to 287; that span reads YLADQ. The Tele-AMP-histidine intermediate role is filled by histidine 308.

It belongs to the RNA 3'-terminal cyclase family. Type 1 subfamily.

It is found in the cytoplasm. The catalysed reaction is a 3'-end 3'-phospho-ribonucleotide-RNA + ATP = a 3'-end 2',3'-cyclophospho-ribonucleotide-RNA + AMP + diphosphate. Its function is as follows. Catalyzes the conversion of 3'-phosphate to a 2',3'-cyclic phosphodiester at the end of RNA. The mechanism of action of the enzyme occurs in 3 steps: (A) adenylation of the enzyme by ATP; (B) transfer of adenylate to an RNA-N3'P to produce RNA-N3'PP5'A; (C) and attack of the adjacent 2'-hydroxyl on the 3'-phosphorus in the diester linkage to produce the cyclic end product. The biological role of this enzyme is unknown but it is likely to function in some aspects of cellular RNA processing. This is RNA 3'-terminal phosphate cyclase from Escherichia coli O8 (strain IAI1).